Here is a 451-residue protein sequence, read N- to C-terminus: Trigger factor (451 aa).

In terms of domain architecture, PPIase FKBP-type spans 173 to 258; the sequence is GDRVTLDFVG…LKKIEWAHLP (86 aa).

It belongs to the FKBP-type PPIase family. Tig subfamily.

The protein resides in the cytoplasm. The enzyme catalyses [protein]-peptidylproline (omega=180) = [protein]-peptidylproline (omega=0). In terms of biological role, involved in protein export. Acts as a chaperone by maintaining the newly synthesized protein in an open conformation. Functions as a peptidyl-prolyl cis-trans isomerase. The sequence is that of Trigger factor from Cupriavidus pinatubonensis (strain JMP 134 / LMG 1197) (Cupriavidus necator (strain JMP 134)).